The chain runs to 192 residues: LexA repressor (192 aa).

A DNA-binding region (H-T-H motif) is located at residues 15 to 35 (RAEIARELGFRSANAAEEHLK). Residues serine 109 and lysine 146 each act as for autocatalytic cleavage activity in the active site.

Belongs to the peptidase S24 family. In terms of assembly, homodimer.

It carries out the reaction Hydrolysis of Ala-|-Gly bond in repressor LexA.. Functionally, represses a number of genes involved in the response to DNA damage (SOS response), including recA and lexA. In the presence of single-stranded DNA, RecA interacts with LexA causing an autocatalytic cleavage which disrupts the DNA-binding part of LexA, leading to derepression of the SOS regulon and eventually DNA repair. The protein is LexA repressor of Photobacterium profundum (strain SS9).